We begin with the raw amino-acid sequence, 560 residues long: DNA ligase B (560 aa).

The active-site N6-AMP-lysine intermediate is K124.

The protein belongs to the NAD-dependent DNA ligase family. LigB subfamily.

It catalyses the reaction NAD(+) + (deoxyribonucleotide)n-3'-hydroxyl + 5'-phospho-(deoxyribonucleotide)m = (deoxyribonucleotide)n+m + AMP + beta-nicotinamide D-nucleotide.. In terms of biological role, catalyzes the formation of phosphodiester linkages between 5'-phosphoryl and 3'-hydroxyl groups in double-stranded DNA using NAD as a coenzyme and as the energy source for the reaction. The polypeptide is DNA ligase B (Escherichia coli (strain SMS-3-5 / SECEC)).